A 2104-amino-acid chain; its full sequence is Myosin type-2 heavy chain 2 (2104 aa).

In terms of domain architecture, Myosin N-terminal SH3-like spans 35 to 85 (DERTWIWIPDSKESFVKAWIVEDLGEKYRVKLERDGSERIVDGFDAEKVNP). Residues 89–767 (DMVDDMAALT…VLGSLEDRRN (679 aa)) form the Myosin motor domain. 182-189 (GESGAGKT) is a binding site for ATP. The interval 646 to 660 (LSSLMHQLEATQPHF) is actin-binding. The stretch at 829–2104 (LGTTQTDEYL…RSNRSPSVLR (1276 aa)) forms a coiled coil. Disordered regions lie at residues 1245–1278 (NRSV…DGNN) and 1398–1426 (MEFT…SKRS). Residues 1246-1259 (RSVTQHTLDGNSPH) are compositionally biased toward polar residues. Positions 1261-1278 (SFEEKHSGDPLKRIDGNN) are enriched in basic and acidic residues. A compositionally biased stretch (polar residues) spans 1409–1424 (SKISNLPSSQPGSPSK). Serine 1421 bears the Phosphoserine mark.

This sequence belongs to the TRAFAC class myosin-kinesin ATPase superfamily. Myosin family. As to quaternary structure, binds to cdc4 and rlc1.

Its function is as follows. Stabilizes the F-actin cables forming the F-actin ring that surrounds the nucleus during interphase. May work in conjunction with myo2. This Schizosaccharomyces pombe (strain 972 / ATCC 24843) (Fission yeast) protein is Myosin type-2 heavy chain 2 (myo3).